A 117-amino-acid chain; its full sequence is Ig heavy chain V-A2 region K-25 (117 aa).

Gln1 carries the pyrrolidone carboxylic acid modification. The region spanning 1–106 (QSVKESEGGL…GLSYLKSSVD (106 aa)) is the Ig-like domain. Cys21 and Cys91 are joined by a disulfide.

In Oryctolagus cuniculus (Rabbit), this protein is Ig heavy chain V-A2 region K-25.